A 744-amino-acid polypeptide reads, in one-letter code: Adenosylcobalamin-dependent ribonucleoside-triphosphate reductase (744 aa).

A disulfide bridge links Cys-120 with Cys-424. An effector region-1 region spans residues 148–159 (SMPFSFLFDQLM). The tract at residues 169–318 (VDENINQIPK…ICNLIGKTVV (150 aa)) is effector region-2. Residues Cys-413 and Glu-415 contribute to the active site. Residues 570–631 (FHYSGYLIQR…SDNFASAGTV (62 aa)) are adenosylcobalamin-binding-1. Residues 690 to 729 (LKQAPKEPISKEKYEKADNHITGNVEIVFEQTNEDQKGLE) form an adenosylcobalamin-binding-2 region.

It belongs to the class II ribonucleoside-triphosphate reductase family. In terms of assembly, monomer. The cofactor is adenosylcob(III)alamin.

The enzyme catalyses a 2'-deoxyribonucleoside 5'-triphosphate + [thioredoxin]-disulfide + H2O = a ribonucleoside 5'-triphosphate + [thioredoxin]-dithiol. Its activity is regulated as follows. Allosterically regulated by ATP and dNTP. The sequence is that of Adenosylcobalamin-dependent ribonucleoside-triphosphate reductase (rtpR) from Lactobacillus gasseri (strain ATCC 33323 / DSM 20243 / BCRC 14619 / CIP 102991 / JCM 1131 / KCTC 3163 / NCIMB 11718 / NCTC 13722 / AM63).